The primary structure comprises 83 residues: MKVLILIIASVLLIGVECKDGYPMNSEGCKISCVIGNTFCDTECKMLKASSGYCWTLGLACYCEGLPENVEVWDSATNKCGGK.

Positions 1–18 (MKVLILIIASVLLIGVEC) are cleaved as a signal peptide. Residues 19 to 81 (KDGYPMNSEG…VWDSATNKCG (63 aa)) enclose the LCN-type CS-alpha/beta domain. 4 disulfides stabilise this stretch: C29–C80, C33–C54, C40–C61, and C44–C63. G81 bears the Glycine amide mark. Residue G82 is a propeptide.

It belongs to the long (4 C-C) scorpion toxin superfamily. Sodium channel inhibitor family. Beta subfamily. Expressed by the venom gland.

Its subcellular location is the secreted. Functionally, beta toxins bind voltage-independently at site-4 of sodium channels (Nav) and shift the voltage of activation toward more negative potentials thereby affecting sodium channel activation and promoting spontaneous and repetitive firing. Is possibly toxic to mice, freshwater shrimp and crickets. The chain is Beta-toxin Ct7 from Centruroides tecomanus (Scorpion).